We begin with the raw amino-acid sequence, 979 residues long: Ankycorbin (979 aa).

Met-1 is subject to N-acetylmethionine. Residue Ser-11 is modified to Phosphoserine. ANK repeat units lie at residues Lys-18–Ser-51, Glu-52–Ala-81, Ser-85–Asn-114, Ser-118–Leu-147, Asp-151–Ser-180, Asn-184–Leu-213, and Leu-217–Leu-247. Positions Leu-247 to Val-259 are enriched in basic and acidic residues. The interval Leu-247–Leu-299 is disordered. At Thr-249 the chain carries Phosphothreonine. The Nuclear localization signal signature appears at Pro-270 to Pro-276. 3 positions are modified to phosphoserine: Ser-281, Ser-286, and Ser-293. Polar residues predominate over residues Pro-282 to Leu-299. A phosphothreonine mark is found at Thr-295 and Thr-297. 8 positions are modified to phosphoserine: Ser-300, Ser-304, Ser-318, Ser-327, Ser-329, Ser-340, Ser-341, and Ser-358. A coiled-coil region spans residues Leu-349 to Ser-374. Disordered stretches follow at residues Thr-392–Asp-429 and Leu-446–Thr-467. Residues Val-430 to Ser-943 are a coiled coil. Over residues Leu-446–Gln-457 the composition is skewed to basic and acidic residues. Polar residues predominate over residues Asp-458 to Thr-467. Residues Ser-513, Ser-516, Ser-667, Ser-694, and Ser-914 each carry the phosphoserine modification.

Interacts with PALLD. Associates with actin. However, does not bind F-actin directly. As to expression, highly expressed in testis, where it localizes to seminiferous tubules (at protein level). Expressed in ganglion cell layer and in Muller cell fibers of the retina (at protein level). In small intestine highly expressed at the apical and lateral borders of absorptive epithelia (at protein level). In liver highly expressed along the bile canaliculi (at protein level).

The protein resides in the cytoplasm. The protein localises to the cytoskeleton. It is found in the stress fiber. Its subcellular location is the cell cortex. It localises to the cell junction. The protein resides in the nucleus. In terms of biological role, plays a role in actin regulation at the ectoplasmic specialization, a type of cell junction specific to testis. Important for establishment of sperm polarity and normal spermatid adhesion. May also promote integrity of Sertoli cell tight junctions at the blood-testis barrier. In Mus musculus (Mouse), this protein is Ankycorbin (Rai14).